A 929-amino-acid chain; its full sequence is Protocadherin gamma-B3 (929 aa).

An N-terminal signal peptide occupies residues 1–30 (MGNSSGWRGPAGQRRMLFLFLLSLLDQALS). Cadherin domains lie at 31–133 (EPIR…PPTF), 134–242 (SQNI…PPVF), 243–347 (TQDM…APEI), 348–452 (TLAS…VPVF), 453–562 (HQAS…APLV), and 570–675 (EGSA…QPDL). Residues 31–691 (EPIRYAIPEE…SDPQAELQFH (661 aa)) are Extracellular-facing. A glycan (N-linked (GlcNAc...) asparagine) is linked at asparagine 136. 2 N-linked (GlcNAc...) asparagine glycosylation sites follow: asparagine 419 and asparagine 545. A helical membrane pass occupies residues 692-712 (LVVALALISVLFLLAVILAIS). Over 713–929 (LRLRCSSRPA…KKKSGKKEKK (217 aa)) the chain is Cytoplasmic. Disordered stretches follow at residues 791 to 838 (NDNP…WPNN) and 899 to 929 (ATLTNAAGKRDGKAPAGGNGNKKKSGKKEKK). Over residues 919 to 929 (NKKKSGKKEKK) the composition is skewed to basic residues.

Its subcellular location is the cell membrane. Potential calcium-dependent cell-adhesion protein. May be involved in the establishment and maintenance of specific neuronal connections in the brain. This chain is Protocadherin gamma-B3 (PCDHGB3), found in Homo sapiens (Human).